The chain runs to 231 residues: DNA mismatch repair protein MutH (231 aa).

This sequence belongs to the MutH family.

It is found in the cytoplasm. Functionally, sequence-specific endonuclease that cleaves unmethylated GATC sequences. It is involved in DNA mismatch repair. This chain is DNA mismatch repair protein MutH, found in Salmonella enteritidis PT4 (strain P125109).